Consider the following 185-residue polypeptide: MIRLASTSETRAKLLQDTGIEFIQSPVDFDEEELLKVYKNPRDFVCAAARGKMEAAVEKYGLEIPIVAADTVVAVSDEILRKAKDEEEARKILQKQSGNKVDIITCMIYKDKEKTVEDLDVTSYIFAPFDEEDLQNYLKSGQWRGKAGACMVEGFCKKYIKEVLGRESTAMGLQVERLAEIAKDL.

D70 functions as the Proton acceptor in the catalytic mechanism.

The protein belongs to the Maf family. A divalent metal cation serves as cofactor.

The protein resides in the cytoplasm. The enzyme catalyses a ribonucleoside 5'-triphosphate + H2O = a ribonucleoside 5'-phosphate + diphosphate + H(+). The catalysed reaction is a 2'-deoxyribonucleoside 5'-triphosphate + H2O = a 2'-deoxyribonucleoside 5'-phosphate + diphosphate + H(+). Its function is as follows. Nucleoside triphosphate pyrophosphatase. May have a dual role in cell division arrest and in preventing the incorporation of modified nucleotides into cellular nucleic acids. The protein is Nucleoside triphosphate pyrophosphatase of Nitratiruptor sp. (strain SB155-2).